The primary structure comprises 810 residues: Janus kinase and microtubule-interacting protein 2 (810 aa).

Coiled-coil stretches lie at residues 13–102 (EALI…EMSR), 148–178 (ERLKLLQEIADLKTAKKQVDEALSNMIQADK), and 207–244 (RRLMDEIKAKDRIIFSLEKELETQTGYVQKLQLQKEAL). Positions 261–274 (PKREIPGRAGDGSE) are enriched in basic and acidic residues. Disordered stretches follow at residues 261–280 (PKREIPGRAGDGSEHCSSPD) and 437–465 (YDEDSMDSETSSMASFRTDRTPATPDDDL). Residues 280–419 (DLRRNQKRIA…REKLIRRRKH (140 aa)) adopt a coiled-coil conformation. 2 coiled-coil regions span residues 468-597 (SLAA…RERR) and 664-808 (EKWI…SNRK).

This sequence belongs to the JAKMIP family. In terms of tissue distribution, highly expressed in brain, moderately expressed in thymus, spleen and lung, and weakly expressed in kidney, liver and peripheral blood lymphocytes. Also expressed in adrenal and pituitary glands, as well as testis.

The protein localises to the golgi apparatus. The sequence is that of Janus kinase and microtubule-interacting protein 2 (JAKMIP2) from Homo sapiens (Human).